The chain runs to 215 residues: Large ribosomal subunit protein uL3 (215 aa).

Gln156 is subject to N5-methylglutamine.

Belongs to the universal ribosomal protein uL3 family. In terms of assembly, part of the 50S ribosomal subunit. Forms a cluster with proteins L14 and L19. In terms of processing, methylated by PrmB.

Functionally, one of the primary rRNA binding proteins, it binds directly near the 3'-end of the 23S rRNA, where it nucleates assembly of the 50S subunit. The sequence is that of Large ribosomal subunit protein uL3 from Xylella fastidiosa (strain 9a5c).